We begin with the raw amino-acid sequence, 827 residues long: Stage II sporulation protein E (827 aa).

10 consecutive transmembrane segments (helical) span residues 49 to 69 (IGFL…ALPF), 71 to 91 (GAML…VLAG), 116 to 136 (VAAF…FFSM), 142 to 162 (GFVY…AIVE), 175 to 195 (QSLP…EEII), 206 to 226 (TGLA…ARYV), 247 to 267 (GLIL…LAFS), 269 to 289 (LLGG…LIVG), 299 to 319 (GSAG…LFLL), and 320 to 340 (TPQS…EHLQ). Over 341–827 (EQQQYARKIR…AIFQNKQEIS (487 aa)) the chain is Cytoplasmic. The PPM-type phosphatase domain occupies 594–804 (STGAAHAAKG…DDMTVVVVRI (211 aa)).

Requires Mn(2+) as cofactor.

The protein localises to the cell membrane. The enzyme catalyses O-phospho-L-seryl-[protein] + H2O = L-seryl-[protein] + phosphate. The catalysed reaction is O-phospho-L-threonyl-[protein] + H2O = L-threonyl-[protein] + phosphate. In terms of biological role, normally needed for pro-sigma E processing during sporulation but can be bypassed in vegetative cells. Activates SpoIIAA by dephosphorylation. The polypeptide is Stage II sporulation protein E (spoIIE) (Bacillus subtilis (strain 168)).